The primary structure comprises 143 residues: Deoxyuridine 5'-triphosphate nucleotidohydrolase (143 aa).

Substrate is bound by residues 63-65, N76, 80-82, and K90; these read RSG and TID.

The protein belongs to the dUTPase family. Requires Mg(2+) as cofactor.

It catalyses the reaction dUTP + H2O = dUMP + diphosphate + H(+). The protein operates within pyrimidine metabolism; dUMP biosynthesis; dUMP from dCTP (dUTP route): step 2/2. Its function is as follows. This enzyme is involved in nucleotide metabolism: it produces dUMP, the immediate precursor of thymidine nucleotides and it decreases the intracellular concentration of dUTP so that uracil cannot be incorporated into DNA. The sequence is that of Deoxyuridine 5'-triphosphate nucleotidohydrolase from Clostridioides difficile (Peptoclostridium difficile).